We begin with the raw amino-acid sequence, 203 residues long: Ras-related protein RABD2a (203 aa).

Residues Gly15–Cys23, Tyr33–Thr40, Asp63–Gln67, Asn121–Asp124, and Ser151–Lys153 contribute to the GTP site. The Effector region signature appears at Tyr37 to Phe45. The interval Gln176 to Thr203 is disordered. 2 S-geranylgeranyl cysteine lipidation sites follow: Cys200 and Cys201.

This sequence belongs to the small GTPase superfamily. Rab family. Does not interact with GC5.

The protein localises to the golgi apparatus. Its subcellular location is the trans-Golgi network membrane. The protein resides in the golgi apparatus membrane. In terms of biological role, protein transport. Regulator of membrane traffic from the Golgi apparatus towards the endoplasmic reticulum (ER). In Arabidopsis thaliana (Mouse-ear cress), this protein is Ras-related protein RABD2a (RABD2A).